A 151-amino-acid chain; its full sequence is GTP-dependent dephospho-CoA kinase (151 aa).

GTP contacts are provided by Asp30, Val31, Asp49, Lys51, and Glu104.

This sequence belongs to the GTP-dependent DPCK family.

The catalysed reaction is 3'-dephospho-CoA + GTP = GDP + CoA + H(+). It functions in the pathway cofactor biosynthesis; coenzyme A biosynthesis. Catalyzes the GTP-dependent phosphorylation of the 3'-hydroxyl group of dephosphocoenzyme A to form coenzyme A (CoA). This Cenarchaeum symbiosum (strain A) protein is GTP-dependent dephospho-CoA kinase.